The primary structure comprises 399 residues: V-set and immunoglobulin domain-containing protein 4 (399 aa).

The N-terminal stretch at 1–19 is a signal peptide; that stretch reads MGILLGLLLLGHLTVDTYG. The Extracellular segment spans residues 20–283; that stretch reads RPILEVPESV…TSAGPGKSLP (264 aa). 2 Ig-like domains span residues 21-131 and 143-226; these read PILE…DKIT and PTVT…SDIV. 2 cysteine pairs are disulfide-bonded: Cys-41-Cys-113 and Cys-165-Cys-211. A helical transmembrane segment spans residues 284 to 304; that stretch reads VFAIILIISLCCMVVFTMAYI. At 305-399 the chain is on the cytoplasmic side; it reads MLCRKTSQQE…FLATEGKSVC (95 aa).

Abundantly expressed in several fetal tissues. In adult tissues, highest expression in lung and placenta. Expressed in resting macrophages.

The protein localises to the membrane. In terms of biological role, phagocytic receptor, strong negative regulator of T-cell proliferation and IL2 production. Potent inhibitor of the alternative complement pathway convertases. This is V-set and immunoglobulin domain-containing protein 4 (VSIG4) from Homo sapiens (Human).